Consider the following 243-residue polypeptide: R-spondin-2 (243 aa).

An N-terminal signal peptide occupies residues 1–21 (MQFQLFSFALIILNCVDYSHC). 11 cysteine pairs are disulfide-bonded: Cys-40/Cys-46, Cys-43/Cys-52, Cys-55/Cys-74, Cys-78/Cys-93, Cys-96/Cys-104, Cys-101/Cys-110, Cys-113/Cys-124, Cys-128/Cys-141, Cys-145/Cys-187, Cys-156/Cys-163, and Cys-196/Cys-203. The FU repeat unit spans residues 90 to 134 (MNRCSRCRIENCDSCFSRDFCIKCKSGFYSLKGQCFEECPEGFAP). One can recognise a TSP type-1 domain in the interval 144 to 204 (GCEVGPWSEW…RCKMAIRHCP (61 aa)). Residue Asn-160 is glycosylated (N-linked (GlcNAc...) asparagine). Residues 204–224 (PGGKRTTKKKDKRNKKKKKKL) show a composition bias toward basic residues. Positions 204 to 243 (PGGKRTTKKKDKRNKKKKKKLLERAQEQHSVVLATDRSSQ) are disordered.

It belongs to the R-spondin family. In terms of assembly, binds heparin.

It localises to the secreted. Functionally, activator of the canonical Wnt signaling pathway by acting as a ligand for lgr4-6 receptors. Upon binding to lgr4-6 (lgr4, lgr5 or lgr6), lgr4-6 associate with phosphorylated lrp6 and frizzled receptors that are activated by extracellular Wnt receptors, triggering the canonical Wnt signaling pathway to increase expression of target genes. Acts both in the canonical Wnt/beta-catenin-dependent pathway and in non-canonical Wnt signaling pathway. Activates neural markers and promotes muscle formation. Overexpression blocks activin, nodal and BMP4 signaling, suggesting that it may negatively regulate the TGF-beta pathway. During embryonic development, plays a crucial role in limb specification, amplifying the Wnt signaling pathway independently of LGR4-6 receptors, possibly by acting as a direct antagonistic ligand to RNF43 and ZNRF3, hence governing the number of limbs an embryo should form. The sequence is that of R-spondin-2 (rspo2) from Xenopus laevis (African clawed frog).